Consider the following 1046-residue polypeptide: MSKFFIDRPIFAWVIALVIMLAGGLSILSLPVNQYPAIAPPAIAVQVSYPGASAETVQDTVVQVIEQQMNGIDNLRYISSESNSDGSMTITVTFEQGTDPDIAQVQVQNKLQLATPLLPQEVQRQGIRVTKAVKNFLMVVGVVSTDGSMTKEDLSNYIVSNIQDPLSRTKGVGDFQVFGSQYSMRIWLDPAKLNSYQLTPGDVSSAIQAQNVQISSGQLGGLPAVKGQQLNATIIGKTRLQTAEQFENILLKVNPDGSQVRLKDVADVGLGGQDYSINAQFNGSPASGIAIKLATGANALDTAKAIRQTIANLEPFMPQGMKVVYPYDTTPVVSASIHEVVKTLGEAILLVFLVMYLFLQNFRATLIPTIAVPVVLLGTFGVLAAFGFSINTLTMFGMVLAIGLLVDDAIVVVENVERVMAEEGLSPREAARKSMGQIQGALVGIAMVLSAVFLPMAFFGGSTGVIYRQFSITIVSAMALSVIVALILTPALCATMLKPIEKGDHGEHKGGFFGWFNRMFLSTTHGYERGVASILKHRAPYLLIYVVIVAGMIWMFTRIPTAFLPDEDQGVLFAQVQTPPGSSAERTQVVVDSMREYLLEKESSSVSSVFTVTGFNFAGRGQSSGMAFIMLKPWEERPGGENSVFELAKRAQMHFFSFKDAMVFAFAPPSVLELGNATGFDLFLQDQAGVGHEVLLQARNKFLMLAAQNPALQRVRPNGMSDEPQYKLEIDDEKASALGVSLADINSTVSIAWGSSYVNDFIDRGRVKRVYLQGRPDARMNPDDLSKWYVRNDKGEMVPFNAFATGKWEYGSPKLERYNGVPAMEILGEPAPGLSSGDAMAAVEEIVKQLPKGVGYSWTGLSYEERLSGSQAPALYALSLLVVFLCLAALYESWSIPFSVMLVVPLGVIGALLATSMRGLSNDVFFQVGLLTTIGLSAKNAILIVEFAKELHEQGKGIVEAAIEACRMRLRPIVMTSLAFILGVVPLAISTGAGSGSQHAIGTGVIGGMVTATVLAIFWVPLFYVAVSTLFKDEASKQQASVEKGQ.

Residues 1–9 are Cytoplasmic-facing; sequence MSKFFIDRP. The helical transmembrane segment at 10-28 threads the bilayer; the sequence is IFAWVIALVIMLAGGLSIL. The Periplasmic portion of the chain corresponds to 29–339; the sequence is SLPVNQYPAI…TPVVSASIHE (311 aa). Residues 340–359 traverse the membrane as a helical segment; that stretch reads VVKTLGEAILLVFLVMYLFL. Topologically, residues 360 to 365 are cytoplasmic; it reads QNFRAT. Residues 366-385 traverse the membrane as a helical segment; that stretch reads LIPTIAVPVVLLGTFGVLAA. Residues 386-391 lie on the Periplasmic side of the membrane; sequence FGFSIN. A helical membrane pass occupies residues 392–413; it reads TLTMFGMVLAIGLLVDDAIVVV. Topologically, residues 414–441 are cytoplasmic; that stretch reads ENVERVMAEEGLSPREAARKSMGQIQGA. A helical transmembrane segment spans residues 442 to 460; sequence LVGIAMVLSAVFLPMAFFG. Topologically, residues 461–473 are periplasmic; the sequence is GSTGVIYRQFSIT. The chain crosses the membrane as a helical span at residues 474–496; the sequence is IVSAMALSVIVALILTPALCATM. Over 497 to 538 the chain is Cytoplasmic; the sequence is LKPIEKGDHGEHKGGFFGWFNRMFLSTTHGYERGVASILKHR. Residues 539-557 traverse the membrane as a helical segment; the sequence is APYLLIYVVIVAGMIWMFT. At 558–871 the chain is on the periplasmic side; sequence RIPTAFLPDE…SYEERLSGSQ (314 aa). A helical transmembrane segment spans residues 872-891; it reads APALYALSLLVVFLCLAALY. Over 892–897 the chain is Cytoplasmic; sequence ESWSIP. The chain crosses the membrane as a helical span at residues 898–917; sequence FSVMLVVPLGVIGALLATSM. Residues 918 to 923 lie on the Periplasmic side of the membrane; sequence RGLSND. Residues 924 to 945 form a helical membrane-spanning segment; that stretch reads VFFQVGLLTTIGLSAKNAILIV. Residues 946–972 are Cytoplasmic-facing; it reads EFAKELHEQGKGIVEAAIEACRMRLRP. A helical membrane pass occupies residues 973-991; the sequence is IVMTSLAFILGVVPLAIST. The Periplasmic segment spans residues 992 to 1004; sequence GAGSGSQHAIGTG. The helical transmembrane segment at 1005 to 1027 threads the bilayer; the sequence is VIGGMVTATVLAIFWVPLFYVAV. Over 1028-1046 the chain is Cytoplasmic; it reads STLFKDEASKQQASVEKGQ.

Belongs to the resistance-nodulation-cell division (RND) (TC 2.A.6) family. As to quaternary structure, component of the MexAB-OprM multidrug efflux complex, composed of six MexA subunits forming a hexameric tube, binding to a MexB trimer, which interact with the trimeric OprM outer membrane channel protein. OprM is thought to not directly contact MexB; instead, MexA joins MexB and OprM by forming a funnel-like hexamer anchored to the inner membrane. MexA may initially form a hexameric ring complex with MexB prior to OprM, then OprM undergoes a conformational change as it contacts MexA, allowing the periplasmic gate to open. It is thought that, under high intracellular substrate concentration, MexB ejects substrate into the tunnel formed by MexA-OprM; as the substrate level declines, conformational changes in MexB cause efflux to reduce and stop and the complex shifts to the closed state. Acts as a substrate:proton antiporter and activity is enhanced significantly when in complex with MexA and OprM, in vitro.

The protein localises to the cell inner membrane. Export of antibiotics and solvents is dramatically decreased in the presence of the protonophore carbonyl cyanide m-chlorophenylhydrazone (CCCP), therefore may be driven by a proton gradient. Antibiotic efflux is inhibited by pyridopyrimidine derivatives, such as ABI-PP, acting by binding to a hydrophobic pocket in MexB. Its function is as follows. The inner membrane transporter component of the MexAB-OprM efflux system that confers multidrug resistance. Functions as the major efflux pump for n-hexane and p-xylene efflux. Has been shown in one study to be involved in the active efflux of the autoinducer N-(3-oxododecanoyl) homoserine lactone, thereby playing an indirect role in quorum-sensing; but has been shown in another study not to be involved in efflux of this autoinducer. Over-expression of the pump increases antibiotic and solvent efflux capacities. Implicated in the secretion of the siderophore pyoverdine. This chain is Multidrug resistance protein MexB (mexB), found in Pseudomonas aeruginosa (strain ATCC 15692 / DSM 22644 / CIP 104116 / JCM 14847 / LMG 12228 / 1C / PRS 101 / PAO1).